The chain runs to 447 residues: Rab GDP dissociation inhibitor alpha (447 aa).

Position 427 is a phosphoserine (serine 427).

This sequence belongs to the Rab GDI family. As to quaternary structure, interacts with RHOH. Interacts with the non-phosphorylated forms of RAB1A, RAB3A, RAB5A, RAB5B, RAB5C, RAB8A, RAB8B, RAB12, RAB35, and RAB43. Interacts with RAB10. In terms of tissue distribution, high expression in brain, lower in other tissues.

It is found in the cytoplasm. The protein resides in the golgi apparatus. It localises to the trans-Golgi network. In terms of biological role, regulates the GDP/GTP exchange reaction of most Rab proteins by inhibiting the dissociation of GDP from them, and the subsequent binding of GTP to them. Promotes the dissociation of GDP-bound Rab proteins from the membrane and inhibits their activation. Promotes the dissociation of RAB1A, RAB3A, RAB5A and RAB10 from membranes. The sequence is that of Rab GDP dissociation inhibitor alpha (Gdi1) from Mus musculus (Mouse).